A 66-amino-acid polypeptide reads, in one-letter code: Beta-toxin Css6 (66 aa).

The 66-residue stretch at K1–N66 folds into the LCN-type CS-alpha/beta domain. 4 cysteine pairs are disulfide-bonded: C12–C65, C16–C41, C25–C46, and C29–C48. The residue at position 66 (N66) is an Asparagine amide.

Belongs to the long (4 C-C) scorpion toxin superfamily. Sodium channel inhibitor family. Beta subfamily. As to expression, expressed by the venom gland.

The protein resides in the secreted. Beta toxins bind voltage-independently at site-4 of sodium channels (Nav) and shift the voltage of activation toward more negative potentials thereby affecting sodium channel activation and promoting spontaneous and repetitive firing. The polypeptide is Beta-toxin Css6 (Centruroides suffusus (Durango bark scorpion)).